The following is a 678-amino-acid chain: UvrABC system protein B (678 aa).

A Helicase ATP-binding domain is found at 31–417; sequence EGLENGLAHQ…KSGGEIIDQV (387 aa). 44 to 51 is an ATP binding site; that stretch reads GVTGSGKT. Residues 97–120 carry the Beta-hairpin motif; that stretch reads YYDYYQPEAYVPSSDTFIEKDASI. The Helicase C-terminal domain maps to 436 to 589; sequence QVDDLLSEAR…QMKYNEARGI (154 aa). One can recognise a UVR domain in the interval 638-673; the sequence is QQQIKKLEQQMYKYAQDLEFEKAAAVRDQLQQLREH.

This sequence belongs to the UvrB family. Forms a heterotetramer with UvrA during the search for lesions. Interacts with UvrC in an incision complex.

The protein resides in the cytoplasm. Its function is as follows. The UvrABC repair system catalyzes the recognition and processing of DNA lesions. A damage recognition complex composed of 2 UvrA and 2 UvrB subunits scans DNA for abnormalities. Upon binding of the UvrA(2)B(2) complex to a putative damaged site, the DNA wraps around one UvrB monomer. DNA wrap is dependent on ATP binding by UvrB and probably causes local melting of the DNA helix, facilitating insertion of UvrB beta-hairpin between the DNA strands. Then UvrB probes one DNA strand for the presence of a lesion. If a lesion is found the UvrA subunits dissociate and the UvrB-DNA preincision complex is formed. This complex is subsequently bound by UvrC and the second UvrB is released. If no lesion is found, the DNA wraps around the other UvrB subunit that will check the other stand for damage. The sequence is that of UvrABC system protein B from Pasteurella multocida (strain Pm70).